We begin with the raw amino-acid sequence, 519 residues long: Maturase K (519 aa).

It belongs to the intron maturase 2 family. MatK subfamily.

The protein localises to the plastid. It localises to the chloroplast. Its function is as follows. Usually encoded in the trnK tRNA gene intron. Probably assists in splicing its own and other chloroplast group II introns. This Aesculus pavia (Red buckeye) protein is Maturase K.